The chain runs to 237 residues: tRNA (guanine-N(7)-)-methyltransferase (237 aa).

D35, E60, N87, and D113 together coordinate S-adenosyl-L-methionine. Residue D113 is part of the active site. 2 residues coordinate substrate: K117 and D149.

It belongs to the class I-like SAM-binding methyltransferase superfamily. TrmB family.

The enzyme catalyses guanosine(46) in tRNA + S-adenosyl-L-methionine = N(7)-methylguanosine(46) in tRNA + S-adenosyl-L-homocysteine. It functions in the pathway tRNA modification; N(7)-methylguanine-tRNA biosynthesis. Its function is as follows. Catalyzes the formation of N(7)-methylguanine at position 46 (m7G46) in tRNA. The protein is tRNA (guanine-N(7)-)-methyltransferase of Synechococcus sp. (strain CC9311).